Reading from the N-terminus, the 479-residue chain is Cardiolipin synthase A (479 aa).

2 consecutive transmembrane segments (helical) span residues F8 to V28 and I38 to F58. PLD phosphodiesterase domains follow at residues V218–Y245 and Q392–S419. Residues H223, K225, D230, H397, K399, and D404 contribute to the active site.

It belongs to the phospholipase D family. Cardiolipin synthase subfamily. ClsA sub-subfamily.

It is found in the cell inner membrane. The enzyme catalyses 2 a 1,2-diacyl-sn-glycero-3-phospho-(1'-sn-glycerol) = a cardiolipin + glycerol. Catalyzes the reversible phosphatidyl group transfer from one phosphatidylglycerol molecule to another to form cardiolipin (CL) (diphosphatidylglycerol) and glycerol. The polypeptide is Cardiolipin synthase A (Pseudomonas entomophila (strain L48)).